The following is a 263-amino-acid chain: Ribonuclease HII (263 aa).

In terms of domain architecture, RNase H type-2 spans Q71–N262. Positions 77, 78, and 172 each coordinate a divalent metal cation.

The protein belongs to the RNase HII family. Requires Mn(2+) as cofactor. Mg(2+) serves as cofactor.

It localises to the cytoplasm. It catalyses the reaction Endonucleolytic cleavage to 5'-phosphomonoester.. Endonuclease that specifically degrades the RNA of RNA-DNA hybrids. This is Ribonuclease HII from Streptococcus pyogenes serotype M2 (strain MGAS10270).